The following is a 302-amino-acid chain: Lipoyl synthase (302 aa).

Residues cysteine 54, cysteine 59, cysteine 65, cysteine 80, cysteine 84, cysteine 87, and serine 291 each coordinate [4Fe-4S] cluster. One can recognise a Radical SAM core domain in the interval 66–280 (WSRKTATYML…RIYGKSIGFK (215 aa)).

Belongs to the radical SAM superfamily. Lipoyl synthase family. [4Fe-4S] cluster is required as a cofactor.

The protein localises to the cytoplasm. It carries out the reaction [[Fe-S] cluster scaffold protein carrying a second [4Fe-4S](2+) cluster] + N(6)-octanoyl-L-lysyl-[protein] + 2 oxidized [2Fe-2S]-[ferredoxin] + 2 S-adenosyl-L-methionine + 4 H(+) = [[Fe-S] cluster scaffold protein] + N(6)-[(R)-dihydrolipoyl]-L-lysyl-[protein] + 4 Fe(3+) + 2 hydrogen sulfide + 2 5'-deoxyadenosine + 2 L-methionine + 2 reduced [2Fe-2S]-[ferredoxin]. Its pathway is protein modification; protein lipoylation via endogenous pathway; protein N(6)-(lipoyl)lysine from octanoyl-[acyl-carrier-protein]: step 2/2. Its function is as follows. Catalyzes the radical-mediated insertion of two sulfur atoms into the C-6 and C-8 positions of the octanoyl moiety bound to the lipoyl domains of lipoate-dependent enzymes, thereby converting the octanoylated domains into lipoylated derivatives. The protein is Lipoyl synthase of Leptospira borgpetersenii serovar Hardjo-bovis (strain JB197).